The sequence spans 747 residues: Phenylalanine ammonia-lyase 2 (747 aa).

The span at 1–20 (MTILSGTTAAPRVNGTTMNG) shows a compositional bias: polar residues. Positions 1-47 (MTILSGTTAAPRVNGTTMNGHSKPHTNGVHLNGHAPKATTESPWPQS) are disordered. Catalysis depends on Tyr-124, which acts as the Proton donor/acceptor. Positions 229–231 (ASG) form a cross-link, 5-imidazolinone (Ala-Gly). At Ser-230 the chain carries 2,3-didehydroalanine (Ser). 7 residues coordinate (E)-cinnamate: Asn-290, Gln-380, Arg-386, Asn-416, Lys-487, Glu-515, and Asn-518.

Belongs to the PAL/histidase family. As to quaternary structure, homotetramer. Post-translationally, contains an active site 4-methylidene-imidazol-5-one (MIO), which is formed autocatalytically by cyclization and dehydration of residues Ala-Ser-Gly.

Its subcellular location is the cytoplasm. It catalyses the reaction L-phenylalanine = (E)-cinnamate + NH4(+). The protein operates within phenylpropanoid metabolism; trans-cinnamate biosynthesis; trans-cinnamate from L-phenylalanine: step 1/1. In terms of biological role, catalyzes the non-oxidative deamination of L-phenylalanine to form trans-cinnamic acid and a free ammonium ion. Facilitates the commitment step in phenylpropanoid pathways that produce secondary metabolites such as lignins, coumarins and flavonoids. This is Phenylalanine ammonia-lyase 2 from Pleurotus ostreatus (Oyster mushroom).